A 229-amino-acid chain; its full sequence is Prolactin (229 aa).

The first 30 residues, 1–30 (MDNKGWSLKGSLLFLLLLLSDLLLCKSVAS), serve as a signal peptide directing secretion. Cys-34 and Cys-41 form a disulfide bridge. Ser-56 bears the Phosphoserine mark. A glycan (N-linked (GlcNAc...) asparagine) is linked at Asn-61. Phosphoserine occurs at positions 64 and 120. Disulfide bonds link Cys-88/Cys-204 and Cys-221/Cys-229.

Belongs to the somatotropin/prolactin family. In terms of assembly, interacts with PRLR.

Its subcellular location is the secreted. Its function is as follows. Prolactin acts primarily on the mammary gland by promoting lactation. This Felis catus (Cat) protein is Prolactin (PRL).